A 492-amino-acid polypeptide reads, in one-letter code: Putative methyl-accepting chemotaxis AlkN (492 aa).

2 consecutive transmembrane segments (helical) span residues 9–29 and 159–179; these read FFLI…GMRL and YVYF…FLLM. Residues 180-231 form the HAMP domain; the sequence is KKTRSSIDEIVHVMNDMSRGDLTYRTIPSNDEVGKMQSSIIAMGAGVSALIE. Positions 236–472 constitute a Methyl-accepting transducer domain; that stretch reads IQGDLFNSAG…DMLDNANIIR (237 aa).

It belongs to the methyl-accepting chemotaxis (MCP) protein family.

Its subcellular location is the membrane. The protein operates within hydrocarbon metabolism; alkane degradation. Functionally, chemotactic-signal transducers respond to changes in the concentration of attractants and repellents in the environment, transduce a signal from the outside to the inside of the cell, and facilitate sensory adaptation through the variation of the level of methylation. This Ectopseudomonas oleovorans (Pseudomonas oleovorans) protein is Putative methyl-accepting chemotaxis AlkN (alkN).